A 445-amino-acid chain; its full sequence is StAR-related lipid transfer protein 3 (445 aa).

Residues 1 to 51 are Cytoplasmic-facing; that stretch reads MSKLPRELTRDLERSLPAVASLGSSLSHSQSLSSHLLPPPEKRRAISDVRR. Residues 46–217 form the MENTAL domain; it reads ISDVRRTFCL…YSPPESFAGS (172 aa). The helical transmembrane segment at 52–72 threads the bilayer; that stretch reads TFCLFVTFDLLFISLLWIIEL. The Extracellular segment spans residues 73 to 94; the sequence is NTNTGIRKNLEQEIIQYNFKTS. The helical transmembrane segment at 95–115 threads the bilayer; sequence FFDIFVLAFFRFSGLLLGYAV. Residues 116 to 120 lie on the Cytoplasmic side of the membrane; the sequence is LRLRH. A helical membrane pass occupies residues 121–141; it reads WWVIAVTTLVSSAFLIVKVIL. Over 142–148 the chain is Extracellular; sequence SELLSKG. A helical membrane pass occupies residues 149–169; sequence AFGYLLPIVSFVLAWLETWFL. Residues 170–445 lie on the Cytoplasmic side of the membrane; that stretch reads DFKVLPQEAE…QRISELGARA (276 aa). Positions 206–212 match the FFAT motif; that stretch reads QFYSPPE. Ser-209 is modified (phosphoserine). The START domain maps to 230–443; it reads SFSAQEREYI…LRQRISELGA (214 aa).

It belongs to the STARD3 family. Homodimer. Interacts (via the MENTAL domain) with STARD3NL. Interacts (via phosphorylated FFAT motif) with VAPA (via MSP domain). Interacts (via phosphorylated FFAT motif) with VAPB (via MSP domain). Interacts (via phosphorylated FFAT motif) with MOSPD2 (via MSP domain); this interaction allows enrichment of MOSPD2 around endosomes. Phosphorylation at Ser-209 is necessary and sufficient for the direct interaction of the phosphorylated FFAT motif with the MSP domain of MOSPD2, VAPA and VAPB and allows the tethering of two membranes that participates in the formation of ER-endosome contacts. Phosphorylation of the FFAT motif leads to conformation changes. Additional phosphorylations around the core FFAT motif (QFYSPPE) are not essential but strengthen the interaction with MOSPD2, VAPA and VAPB. Phosphorylation at Ser-209 of FFAT motif drives membrane tethering between the endoplasmic reticulum and late endosomes via interaction with VAPA and VAPB that in turn allows the efficient transport of sterol mediated by the START domain. As to expression, expressed in retina.

It localises to the late endosome membrane. It catalyses the reaction cholesterol(in) = cholesterol(out). In terms of biological role, sterol-binding protein that mediates cholesterol transport from the endoplasmic reticulum to endosomes. The sterol transport mechanism is triggered by phosphorylation of FFAT motif that leads to membrane tethering between the endoplasmic reticulum and late endosomes via interaction with VAPA and VAPB. Acts as a lipid transfer protein that redirects sterol to the endosome at the expense of the cell membrane and favors membrane formation inside endosomes. May also mediate cholesterol transport between other membranes, such as mitochondria membrane or cell membrane. However, such results need additional experimental evidences; probably mainly mediates cholesterol transport from the endoplasmic reticulum to endosomes. Does not activate transcriptional cholesterol sensing. Able to bind other lipids, such as lutein, a xanthophyll carotenoids that form the macular pigment of the retina. This is StAR-related lipid transfer protein 3 from Homo sapiens (Human).